A 583-amino-acid polypeptide reads, in one-letter code: Aspartate--tRNA(Asp/Asn) ligase (583 aa).

E171 provides a ligand contact to L-aspartate. Residues 195-198 (QLFK) form an aspartate region. R217 serves as a coordination point for L-aspartate. ATP is bound by residues 217-219 (RDE) and Q226. H443 contributes to the L-aspartate binding site. ATP is bound at residue E476. R483 provides a ligand contact to L-aspartate. Residue 528–531 (GLDR) participates in ATP binding.

Belongs to the class-II aminoacyl-tRNA synthetase family. Type 1 subfamily. In terms of assembly, homodimer.

The protein localises to the cytoplasm. The catalysed reaction is tRNA(Asx) + L-aspartate + ATP = L-aspartyl-tRNA(Asx) + AMP + diphosphate. In terms of biological role, aspartyl-tRNA synthetase with relaxed tRNA specificity since it is able to aspartylate not only its cognate tRNA(Asp) but also tRNA(Asn). Reaction proceeds in two steps: L-aspartate is first activated by ATP to form Asp-AMP and then transferred to the acceptor end of tRNA(Asp/Asn). This is Aspartate--tRNA(Asp/Asn) ligase from Ruthia magnifica subsp. Calyptogena magnifica.